The primary structure comprises 243 residues: UPF0688 protein C1orf174 (243 aa).

Disordered regions lie at residues 78-100 (NDSA…AEGS) and 132-243 (LAKT…DAEM). Over residues 145 to 157 (SAGSGAEESNSSS) the composition is skewed to low complexity. Residues serine 148 and serine 189 each carry the phosphoserine modification. Over residues 233 to 243 (DDDDDDDDAEM) the composition is skewed to acidic residues.

This sequence belongs to the UPF0688 family.

It is found in the nucleus. The protein is UPF0688 protein C1orf174 (C1orf174) of Homo sapiens (Human).